Here is a 305-residue protein sequence, read N- to C-terminus: Homoserine O-succinyltransferase (305 aa).

C142 serves as the catalytic Acyl-thioester intermediate. Residues K163 and S192 each contribute to the substrate site. H235 (proton acceptor) is an active-site residue. E237 is a catalytic residue. R249 serves as a coordination point for substrate.

It belongs to the MetA family.

It localises to the cytoplasm. The catalysed reaction is L-homoserine + succinyl-CoA = O-succinyl-L-homoserine + CoA. Its pathway is amino-acid biosynthesis; L-methionine biosynthesis via de novo pathway; O-succinyl-L-homoserine from L-homoserine: step 1/1. Its function is as follows. Transfers a succinyl group from succinyl-CoA to L-homoserine, forming succinyl-L-homoserine. The sequence is that of Homoserine O-succinyltransferase from Psychromonas ingrahamii (strain DSM 17664 / CCUG 51855 / 37).